A 961-amino-acid chain; its full sequence is Protein lin-2 (961 aa).

Positions 17 to 281 constitute a Protein kinase domain; it reads LSIRDVIEQG…AKEALNHEWI (265 aa). The calmodulin-binding stretch occupies residues 310-320; that stretch reads KSNVLSAVNSG. The disordered stretch occupies residues 318-366; the sequence is NSGRFDETTPRQDTPQTAFVDGSSPGGDCCHRGESSSNDAAEPPADKDL. L27 domains lie at 365–422 and 428–479; these read DLSG…CEPV and TSTL…RDPK. One can recognise a PDZ domain in the interval 545-620; it reads RLVQFQKDTQ…MLRDARGQVT (76 aa). In terms of domain architecture, SH3 spans 633 to 717; the sequence is ACEIFVRAQF…PSPELQEWRT (85 aa). The 173-residue stretch at 774 to 946 folds into the Guanylate kinase-like domain; that stretch reads RKTLVLLGAH…TIAQLERLVE (173 aa).

The protein belongs to the MAGUK family.

Its function is as follows. May play a structural role in the induction of the vulva. May be required for the localization of signal transduction molecules (such as let-23 receptor) to either the basal membrane domain or the cell junctions. The sequence is that of Protein lin-2 (lin-2) from Caenorhabditis elegans.